A 546-amino-acid polypeptide reads, in one-letter code: Probable E3 ubiquitin-protein ligase NGR_a03640 (546 aa).

The interval 1–70 (MNVQRPGLAV…RPWEGRPQEA (70 aa)) is disordered. The segment at 1–248 (MNVQRPGLAV…YAGPQIFLPM (248 aa)) is interaction with target proteins. Positions 22-48 (SEPGSPAAAARWVEASTEAEASAASSS) are enriched in low complexity. Positions 58 to 67 (AEERPWEGRP) are enriched in basic and acidic residues. 5 LRR repeats span residues 104 to 125 (GLRRLNVNNNQLGDLPDTLPGT), 126 to 144 (LLELEASENRLTRLPDLPA), 145 to 166 (GLQRLNVENNRLTNLPEPLPAA), 167 to 186 (LEWLGAGYNQLTRLPEMIPP), and 187 to 208 (ELIWLGARNNQLTSVPESLLTQ). Residues 249–256 (GPVELARR) are linker. In terms of domain architecture, NEL spans 257–546 (PLHEVVADWL…KVLRGRGLEL (290 aa)). The tract at residues 257 to 546 (PLHEVVADWL…KVLRGRGLEL (290 aa)) is E3 ubiquitin-protein ligase catalytic domain. Catalysis depends on Cys-338, which acts as the Glycyl thioester intermediate.

This sequence belongs to the LRR-containing bacterial E3 ligase family. Post-translationally, ubiquitinated in the presence of host E1 ubiquitin-activating enzyme, E2 ubiquitin-conjugating enzyme and ubiquitin.

The protein localises to the secreted. The protein resides in the host cytoplasm. Its function is as follows. Effector proteins function to alter host cell physiology and promote bacterial survival in host tissues. This protein is an E3 ubiquitin ligase that interferes with host's ubiquitination pathway. The chain is Probable E3 ubiquitin-protein ligase NGR_a03640 from Sinorhizobium fredii (strain NBRC 101917 / NGR234).